A 267-amino-acid chain; its full sequence is Ubiquinone biosynthesis protein COQ4, mitochondrial (267 aa).

A mitochondrion-targeting transit peptide spans 1 to 17 (MSRLKIPSQLLRGGRGF). Zn(2+) is bound by residues His-153, Asp-154, His-157, and Glu-169.

Belongs to the COQ4 family. Component of a multi-subunit COQ enzyme complex, composed of at least COQ3, COQ4, COQ5, COQ6, COQ7 and COQ9. Zn(2+) serves as cofactor.

Its subcellular location is the mitochondrion inner membrane. It carries out the reaction a 4-hydroxy-3-methoxy-5-(all-trans-polyprenyl)benzoate + H(+) = a 2-methoxy-6-(all-trans-polyprenyl)phenol + CO2. It participates in cofactor biosynthesis; ubiquinone biosynthesis. Its function is as follows. Lyase that catalyzes the C1-decarboxylation of 4-hydroxy-3-methoxy-5-(all-trans-polyprenyl)benzoic acid into 2-methoxy-6-(all-trans-polyprenyl)phenol during ubiquinone biosynthesis. The protein is Ubiquinone biosynthesis protein COQ4, mitochondrial of Arthroderma otae (strain ATCC MYA-4605 / CBS 113480) (Microsporum canis).